Consider the following 65-residue polypeptide: DNA gyrase inhibitor YacG (65 aa).

Zn(2+)-binding residues include Cys10, Cys13, Cys29, and Cys33. Residues 45-65 (EKAIPGAPDMSDSDGWSEDQY) form a disordered region. Acidic residues predominate over residues 55-65 (SDSDGWSEDQY).

It belongs to the DNA gyrase inhibitor YacG family. In terms of assembly, interacts with GyrB. It depends on Zn(2+) as a cofactor.

Its function is as follows. Inhibits all the catalytic activities of DNA gyrase by preventing its interaction with DNA. Acts by binding directly to the C-terminal domain of GyrB, which probably disrupts DNA binding by the gyrase. In Vibrio cholerae serotype O1 (strain ATCC 39315 / El Tor Inaba N16961), this protein is DNA gyrase inhibitor YacG.